A 507-amino-acid chain; its full sequence is Histidine ammonia-lyase (507 aa).

The 5-imidazolinone (Ala-Gly) cross-link spans 141-143; the sequence is ASG. Serine 142 is subject to 2,3-didehydroalanine (Ser).

Belongs to the PAL/histidase family. Post-translationally, contains an active site 4-methylidene-imidazol-5-one (MIO), which is formed autocatalytically by cyclization and dehydration of residues Ala-Ser-Gly.

The protein resides in the cytoplasm. It catalyses the reaction L-histidine = trans-urocanate + NH4(+). It participates in amino-acid degradation; L-histidine degradation into L-glutamate; N-formimidoyl-L-glutamate from L-histidine: step 1/3. The sequence is that of Histidine ammonia-lyase from Burkholderia vietnamiensis (strain G4 / LMG 22486) (Burkholderia cepacia (strain R1808)).